Here is a 256-residue protein sequence, read N- to C-terminus: MDVIPAIDLLGGQCVRLFQGDYDQAEVYGKDPVGMALRWAEAGAQRLHLVDLDGAKEGSPVNAEAIATIAQRLSIPVQVGGGLRDRDTVARLLDSGVERAILGTVAVERPALVEALAGEFPGQIAVGIDARSGKVATRGWLEDSGLTAVALAQQMADLGACALICTDIGRDGTLQGPNLEELRAIAAAVSIPVIASGGVGSLTDLLSLLPLEAQGVSGVIVGKALYTGAVDLQEALRAIGSGRWQDVAVDDSSRLA.

Aspartate 8 acts as the Proton acceptor in catalysis. The Proton donor role is filled by aspartate 129.

This sequence belongs to the HisA/HisF family.

The protein localises to the cytoplasm. The enzyme catalyses 1-(5-phospho-beta-D-ribosyl)-5-[(5-phospho-beta-D-ribosylamino)methylideneamino]imidazole-4-carboxamide = 5-[(5-phospho-1-deoxy-D-ribulos-1-ylimino)methylamino]-1-(5-phospho-beta-D-ribosyl)imidazole-4-carboxamide. The protein operates within amino-acid biosynthesis; L-histidine biosynthesis; L-histidine from 5-phospho-alpha-D-ribose 1-diphosphate: step 4/9. In Synechococcus elongatus (strain ATCC 33912 / PCC 7942 / FACHB-805) (Anacystis nidulans R2), this protein is 1-(5-phosphoribosyl)-5-[(5-phosphoribosylamino)methylideneamino] imidazole-4-carboxamide isomerase.